The chain runs to 652 residues: MNKRMNELVALLNRYATEYYTSDNPSVSDSEYDRLYRELVELETAYPEQVLADSPTHRVGGKVLDGFEKYSHQYPLYSLQDAFSREELDAFDARVRKEVAHPTYICELKIDGLSISLTYEKGILVAGVTRGDGSIGENITENLKRVKDIPLTLPEELDITVRGECYMPRASFDQVNQARQENGEPEFANPRNAAAGTLRQLDTAVVAKRNLATFLYQEASPSTRDSQEKGLKYLEQLGFVVNPKRILAENIDEIWNFIQEVGQERENLPYDIDGVVIKVNDLASQEELGFTVKAPKWAVAYKFPAEEKEAQLLSVDWTVGRTGVVTPTANLTPVQLAGTTVSRATLHNVDYIAEKDIRKDDTVIVYKAGDIIPAVLRVVESKRVSEEKLDIPTNCPSCNSDLLHFEDEVALRCINPRCPAQIMEGLIHFASRDAMNITGLGPSIVEKLFAANLVKDVADIYRLQEEDFLLLEGVKEKSAAKLYQAIQASKENSAEKLLFGLGIRHVGSKASQLLLQYFHSIENLYQADSEEVASIESLGGVIAKSLQTYFAAEGSEILLRELKETGVNLDYKGQTVVADAALSGLTVVLTGKLERLKRSEAKSKLESLGAKVTGSVSKKTDLVVVGADAGSKLQKAQELGIQVRDEAWLESL.

Residues 29–33 (DSEYD), 78–79 (SL), and glutamate 107 contribute to the NAD(+) site. The active-site N6-AMP-lysine intermediate is the lysine 109. Positions 130, 164, 278, and 302 each coordinate NAD(+). Zn(2+) contacts are provided by cysteine 395, cysteine 398, cysteine 413, and cysteine 418. The BRCT domain maps to 577–652 (VADAALSGLT…VRDEAWLESL (76 aa)).

The protein belongs to the NAD-dependent DNA ligase family. LigA subfamily. Mg(2+) serves as cofactor. Mn(2+) is required as a cofactor.

It carries out the reaction NAD(+) + (deoxyribonucleotide)n-3'-hydroxyl + 5'-phospho-(deoxyribonucleotide)m = (deoxyribonucleotide)n+m + AMP + beta-nicotinamide D-nucleotide.. Functionally, DNA ligase that catalyzes the formation of phosphodiester linkages between 5'-phosphoryl and 3'-hydroxyl groups in double-stranded DNA using NAD as a coenzyme and as the energy source for the reaction. It is essential for DNA replication and repair of damaged DNA. This Streptococcus pneumoniae serotype 2 (strain D39 / NCTC 7466) protein is DNA ligase.